The sequence spans 184 residues: Ribosome-recycling factor (184 aa).

It belongs to the RRF family.

Its subcellular location is the cytoplasm. Functionally, responsible for the release of ribosomes from messenger RNA at the termination of protein biosynthesis. May increase the efficiency of translation by recycling ribosomes from one round of translation to another. The sequence is that of Ribosome-recycling factor from Stenotrophomonas maltophilia (strain K279a).